A 220-amino-acid chain; its full sequence is Protein DGCR6L (220 aa).

A coiled-coil region spans residues 76–159 (KSLYNQRLRL…ADQQSTLEKA (84 aa)).

Belongs to the gonadal family. In terms of tissue distribution, widely expressed in fetal and adult tissues. Highest expression in liver, heart and skeletal muscle. Lower levels in pancreas and placenta. Weak expression in brain.

The protein resides in the nucleus. In terms of biological role, may play a role in neural crest cell migration into the third and fourth pharyngeal pouches. The polypeptide is Protein DGCR6L (DGCR6L) (Homo sapiens (Human)).